A 358-amino-acid polypeptide reads, in one-letter code: Uroporphyrinogen decarboxylase (358 aa).

Substrate-binding positions include 29-33, F48, D79, Y155, S210, and H330; that span reads RQAGR.

This sequence belongs to the uroporphyrinogen decarboxylase family. In terms of assembly, homodimer.

The protein localises to the cytoplasm. The catalysed reaction is uroporphyrinogen III + 4 H(+) = coproporphyrinogen III + 4 CO2. It functions in the pathway porphyrin-containing compound metabolism; protoporphyrin-IX biosynthesis; coproporphyrinogen-III from 5-aminolevulinate: step 4/4. Functionally, catalyzes the decarboxylation of four acetate groups of uroporphyrinogen-III to yield coproporphyrinogen-III. The chain is Uroporphyrinogen decarboxylase from Bordetella bronchiseptica (strain ATCC BAA-588 / NCTC 13252 / RB50) (Alcaligenes bronchisepticus).